Here is a 410-residue protein sequence, read N- to C-terminus: Putative competence-damage inducible protein (410 aa).

It belongs to the CinA family.

The protein is Putative competence-damage inducible protein of Clostridium kluyveri (strain NBRC 12016).